The following is a 250-amino-acid chain: Phosphoribosylaminoimidazole-succinocarboxamide synthase (250 aa).

This sequence belongs to the SAICAR synthetase family.

It catalyses the reaction 5-amino-1-(5-phospho-D-ribosyl)imidazole-4-carboxylate + L-aspartate + ATP = (2S)-2-[5-amino-1-(5-phospho-beta-D-ribosyl)imidazole-4-carboxamido]succinate + ADP + phosphate + 2 H(+). It participates in purine metabolism; IMP biosynthesis via de novo pathway; 5-amino-1-(5-phospho-D-ribosyl)imidazole-4-carboxamide from 5-amino-1-(5-phospho-D-ribosyl)imidazole-4-carboxylate: step 1/2. This Picosynechococcus sp. (strain ATCC 27264 / PCC 7002 / PR-6) (Agmenellum quadruplicatum) protein is Phosphoribosylaminoimidazole-succinocarboxamide synthase.